Reading from the N-terminus, the 240-residue chain is Uridylate kinase (240 aa).

Residue 15–18 (KLSG) coordinates ATP. The involved in allosteric activation by GTP stretch occupies residues 23–28 (GSEGFG). UMP is bound at residue Gly57. ATP-binding residues include Gly58 and Arg62. UMP is bound by residues Asp77 and 138–145 (TGNPFFTT). Thr165, Tyr171, and Asp174 together coordinate ATP.

It belongs to the UMP kinase family. In terms of assembly, homohexamer.

The protein localises to the cytoplasm. It carries out the reaction UMP + ATP = UDP + ADP. The protein operates within pyrimidine metabolism; CTP biosynthesis via de novo pathway; UDP from UMP (UMPK route): step 1/1. Its activity is regulated as follows. Allosterically activated by GTP. Inhibited by UTP. In terms of biological role, catalyzes the reversible phosphorylation of UMP to UDP. This chain is Uridylate kinase, found in Photobacterium profundum (strain SS9).